Here is a 458-residue protein sequence, read N- to C-terminus: Cysteine--tRNA ligase (458 aa).

Cys-28 lines the Zn(2+) pocket. The 'HIGH' region signature appears at 30–40 (VTVYDLCHFGH). The Zn(2+) site is built by Cys-209, His-234, and Glu-238. The 'KMSKS' region signature appears at 266–270 (KMSKS). Residue Lys-269 participates in ATP binding.

Belongs to the class-I aminoacyl-tRNA synthetase family. Monomer. The cofactor is Zn(2+).

It is found in the cytoplasm. It catalyses the reaction tRNA(Cys) + L-cysteine + ATP = L-cysteinyl-tRNA(Cys) + AMP + diphosphate. This is Cysteine--tRNA ligase from Mannheimia succiniciproducens (strain KCTC 0769BP / MBEL55E).